The sequence spans 466 residues: Ribulose bisphosphate carboxylase large chain (466 aa).

An N6,N6,N6-trimethyllysine modification is found at Lys5. Residues Asn114 and Thr164 each coordinate substrate. The active-site Proton acceptor is Lys166. Lys168 contributes to the substrate binding site. Mg(2+) is bound by residues Lys192, Asp194, and Glu195. Lys192 is subject to N6-carboxylysine. Catalysis depends on His285, which acts as the Proton acceptor. Substrate contacts are provided by Arg286, His318, and Ser370.

The protein belongs to the RuBisCO large chain family. Type I subfamily. In terms of assembly, heterohexadecamer of 8 large chains and 8 small chains; disulfide-linked. The disulfide link is formed within the large subunit homodimers. It depends on Mg(2+) as a cofactor. The disulfide bond which can form in the large chain dimeric partners within the hexadecamer appears to be associated with oxidative stress and protein turnover.

The protein resides in the plastid. Its subcellular location is the chloroplast. The enzyme catalyses 2 (2R)-3-phosphoglycerate + 2 H(+) = D-ribulose 1,5-bisphosphate + CO2 + H2O. The catalysed reaction is D-ribulose 1,5-bisphosphate + O2 = 2-phosphoglycolate + (2R)-3-phosphoglycerate + 2 H(+). RuBisCO catalyzes two reactions: the carboxylation of D-ribulose 1,5-bisphosphate, the primary event in carbon dioxide fixation, as well as the oxidative fragmentation of the pentose substrate in the photorespiration process. Both reactions occur simultaneously and in competition at the same active site. This is Ribulose bisphosphate carboxylase large chain from Vitis aestivalis (Grape).